A 276-amino-acid chain; its full sequence is NADPH-dependent 7-cyano-7-deazaguanine reductase (276 aa).

83-85 (IES) provides a ligand contact to substrate. 85-86 (SK) lines the NADPH pocket. C184 acts as the Thioimide intermediate in catalysis. Residue D191 is the Proton donor of the active site. 223-224 (HE) contributes to the substrate binding site. 252–253 (RG) is an NADPH binding site.

Belongs to the GTP cyclohydrolase I family. QueF type 2 subfamily. As to quaternary structure, homodimer.

The protein localises to the cytoplasm. The catalysed reaction is 7-aminomethyl-7-carbaguanine + 2 NADP(+) = 7-cyano-7-deazaguanine + 2 NADPH + 3 H(+). It functions in the pathway tRNA modification; tRNA-queuosine biosynthesis. In terms of biological role, catalyzes the NADPH-dependent reduction of 7-cyano-7-deazaguanine (preQ0) to 7-aminomethyl-7-deazaguanine (preQ1). This is NADPH-dependent 7-cyano-7-deazaguanine reductase from Pseudomonas savastanoi pv. phaseolicola (strain 1448A / Race 6) (Pseudomonas syringae pv. phaseolicola (strain 1448A / Race 6)).